Reading from the N-terminus, the 286-residue chain is tRNA uridine(34) hydroxylase (286 aa).

The region spanning 130 to 225 is the Rhodanese domain; it reads RGDDVVFFDG…YGETFGDRGL (96 aa). Residue Cys185 is the Cysteine persulfide intermediate of the active site.

The protein belongs to the TrhO family.

The enzyme catalyses uridine(34) in tRNA + AH2 + O2 = 5-hydroxyuridine(34) in tRNA + A + H2O. Its function is as follows. Catalyzes oxygen-dependent 5-hydroxyuridine (ho5U) modification at position 34 in tRNAs. The polypeptide is tRNA uridine(34) hydroxylase (Rhodococcus erythropolis (strain PR4 / NBRC 100887)).